Reading from the N-terminus, the 279-residue chain is MICNSQIAEGWHGKLNLVYADRQGATQLIYNQQQAPLKVQRPFYPEAEKVCHSVILHTAGGMVGGDRLSSNIHLQPQAQALITTAAASKIYRSNGLQARQTIQMQVDPGACLEWLPQETILFNDAIYRQDLRVELATGASWLGWEITRFGRSARGEKFLQGEWRSHTEIWQQSVPLWIDRQCLRGSEDIFHSPHGLAGKPIVGSLVWVGGAVSAEIVEKTRSLWNGEGEVGASRLQHGLLCRYRGSSTSEVRNWFIDVWQLLRVSFLNRGNCIPRVWQV.

Belongs to the UreD family. As to quaternary structure, ureD, UreF and UreG form a complex that acts as a GTP-hydrolysis-dependent molecular chaperone, activating the urease apoprotein by helping to assemble the nickel containing metallocenter of UreC. The UreE protein probably delivers the nickel.

Its subcellular location is the cytoplasm. In terms of biological role, required for maturation of urease via the functional incorporation of the urease nickel metallocenter. The sequence is that of Urease accessory protein UreD from Nostoc punctiforme (strain ATCC 29133 / PCC 73102).